A 178-amino-acid polypeptide reads, in one-letter code: Large ribosomal subunit protein uL6 (178 aa).

The protein belongs to the universal ribosomal protein uL6 family. In terms of assembly, part of the 50S ribosomal subunit.

In terms of biological role, this protein binds to the 23S rRNA, and is important in its secondary structure. It is located near the subunit interface in the base of the L7/L12 stalk, and near the tRNA binding site of the peptidyltransferase center. The polypeptide is Large ribosomal subunit protein uL6 (Francisella tularensis subsp. mediasiatica (strain FSC147)).